The chain runs to 615 residues: UvrABC system protein C (615 aa).

One can recognise a GIY-YIG domain in the interval 12–91; sequence EKPGVYIMKD…IKKYKPKYNV (80 aa). The UVR domain maps to 203 to 238; sequence DWLIQKLKEDMKKAAEELRFEEAARIRDQIFAIERT.

It belongs to the UvrC family. Interacts with UvrB in an incision complex.

It localises to the cytoplasm. In terms of biological role, the UvrABC repair system catalyzes the recognition and processing of DNA lesions. UvrC both incises the 5' and 3' sides of the lesion. The N-terminal half is responsible for the 3' incision and the C-terminal half is responsible for the 5' incision. The protein is UvrABC system protein C of Thermoanaerobacter sp. (strain X514).